The following is a 441-amino-acid chain: tRNA(Ile)-lysidine synthase (441 aa).

28–33 (SGGTDS) contributes to the ATP binding site.

The protein belongs to the tRNA(Ile)-lysidine synthase family.

The protein localises to the cytoplasm. It catalyses the reaction cytidine(34) in tRNA(Ile2) + L-lysine + ATP = lysidine(34) in tRNA(Ile2) + AMP + diphosphate + H(+). Functionally, ligates lysine onto the cytidine present at position 34 of the AUA codon-specific tRNA(Ile) that contains the anticodon CAU, in an ATP-dependent manner. Cytidine is converted to lysidine, thus changing the amino acid specificity of the tRNA from methionine to isoleucine. The polypeptide is tRNA(Ile)-lysidine synthase (Orientia tsutsugamushi (strain Boryong) (Rickettsia tsutsugamushi)).